A 133-amino-acid polypeptide reads, in one-letter code: Mediator of RNA polymerase II transcription subunit 10 (133 aa).

This sequence belongs to the Mediator complex subunit 10 family. Component of the Mediator complex. Interacts with MED4 and MED21.

It is found in the nucleus. In terms of biological role, component of the Mediator complex, a coactivator involved in the regulated transcription of nearly all RNA polymerase II-dependent genes. Mediator functions as a bridge to convey information from gene-specific regulatory proteins to the basal RNA polymerase II transcription machinery. Mediator is recruited to promoters by direct interactions with regulatory proteins and serves as a scaffold for the assembly of a functional preinitiation complex with RNA polymerase II and the general transcription factors. Required for activated transcription of the MtnA, MtnB and MtnD genes. The chain is Mediator of RNA polymerase II transcription subunit 10 (MED10) from Drosophila melanogaster (Fruit fly).